The following is a 258-amino-acid chain: MSLIDPRAIIDPSAVLADGVEVGPWSIIGAGVEIGEGTVIGPHVILKGPTRIGKHNRIYQFSSVGEDTPDLKYKGEETRLVIGDHNVIREGVTIHRGTVQDRSETTLGDHNLIMAYAHIGHDSVIGNHCILVNNTALAGHVHVDDWAILSGFTLVHQYCHIGAHSFSGMGTAIGKDVPAFVTVFGNPAEARSMNFEGMRRRGFSEDAIHALRRAYKTVYRQGLTVEQALAELAEPSAQFPEVAMFRDSIQSSTRGITR.

Belongs to the transferase hexapeptide repeat family. LpxA subfamily. Homotrimer.

The protein resides in the cytoplasm. The enzyme catalyses a (3R)-hydroxyacyl-[ACP] + UDP-N-acetyl-alpha-D-glucosamine = a UDP-3-O-[(3R)-3-hydroxyacyl]-N-acetyl-alpha-D-glucosamine + holo-[ACP]. It participates in glycolipid biosynthesis; lipid IV(A) biosynthesis; lipid IV(A) from (3R)-3-hydroxytetradecanoyl-[acyl-carrier-protein] and UDP-N-acetyl-alpha-D-glucosamine: step 1/6. In terms of biological role, involved in the biosynthesis of lipid A, a phosphorylated glycolipid that anchors the lipopolysaccharide to the outer membrane of the cell. The polypeptide is Acyl-[acyl-carrier-protein]--UDP-N-acetylglucosamine O-acyltransferase (Pseudomonas fluorescens (strain Pf0-1)).